Reading from the N-terminus, the 34-residue chain is Photosystem II reaction center protein M (34 aa).

A helical membrane pass occupies residues 7–27; that stretch reads GFVASLMFILVPAIFLIVLYI.

Belongs to the PsbM family. PSII is composed of 1 copy each of membrane proteins PsbA, PsbB, PsbC, PsbD, PsbE, PsbF, PsbH, PsbI, PsbJ, PsbK, PsbL, PsbM, PsbT, PsbX, PsbY, PsbZ, Psb30/Ycf12, peripheral proteins PsbO, CyanoQ (PsbQ), PsbU, PsbV and a large number of cofactors. It forms dimeric complexes.

The protein resides in the cellular thylakoid membrane. One of the components of the core complex of photosystem II (PSII). PSII is a light-driven water:plastoquinone oxidoreductase that uses light energy to abstract electrons from H(2)O, generating O(2) and a proton gradient subsequently used for ATP formation. It consists of a core antenna complex that captures photons, and an electron transfer chain that converts photonic excitation into a charge separation. This subunit is found at the monomer-monomer interface. The chain is Photosystem II reaction center protein M from Synechococcus sp. (strain CC9605).